Consider the following 288-residue polypeptide: Quinate/shikimate dehydrogenase (288 aa).

Lys-71 and Asp-107 together coordinate substrate. Residues 132-135 (AGGA), 155-158 (NRRD), Lys-205, 232-235 (CVYN), and Gly-255 contribute to the NAD(+) site.

It belongs to the shikimate dehydrogenase family. Homodimer.

It carries out the reaction L-quinate + NAD(+) = 3-dehydroquinate + NADH + H(+). The enzyme catalyses L-quinate + NADP(+) = 3-dehydroquinate + NADPH + H(+). The catalysed reaction is shikimate + NADP(+) = 3-dehydroshikimate + NADPH + H(+). It catalyses the reaction shikimate + NAD(+) = 3-dehydroshikimate + NADH + H(+). Its pathway is metabolic intermediate biosynthesis; chorismate biosynthesis; chorismate from D-erythrose 4-phosphate and phosphoenolpyruvate: step 4/7. In terms of biological role, the actual biological function of YdiB remains unclear, nor is it known whether 3-dehydroshikimate or quinate represents the natural substrate. Catalyzes the reversible NAD-dependent reduction of both 3-dehydroshikimate (DHSA) and 3-dehydroquinate to yield shikimate (SA) and quinate, respectively. It can use both NAD or NADP for catalysis, however it has higher catalytic efficiency with NAD. The polypeptide is Quinate/shikimate dehydrogenase (Escherichia coli O17:K52:H18 (strain UMN026 / ExPEC)).